Reading from the N-terminus, the 483-residue chain is Argininosuccinate lyase (483 aa).

Belongs to the lyase 1 family. Argininosuccinate lyase subfamily.

It is found in the cytoplasm. The enzyme catalyses 2-(N(omega)-L-arginino)succinate = fumarate + L-arginine. It functions in the pathway amino-acid biosynthesis; L-arginine biosynthesis; L-arginine from L-ornithine and carbamoyl phosphate: step 3/3. This chain is Argininosuccinate lyase, found in Albidiferax ferrireducens (strain ATCC BAA-621 / DSM 15236 / T118) (Rhodoferax ferrireducens).